The primary structure comprises 108 residues: Hydrogenase expression/formation protein HupN (108 aa).

A disordered region spans residues 88-108 (REPQLPPHLQAQLPPKEPNSP).

This sequence belongs to the HupF/HypC family.

The chain is Hydrogenase expression/formation protein HupN (hupN) from Azotobacter chroococcum mcd 1.